We begin with the raw amino-acid sequence, 509 residues long: Phytase A (509 aa).

Residues 1–15 form the signal peptide; sequence MFLLMVPLFSYLAAA. Cys27 and Cys36 form a disulfide bridge. 7 residues coordinate 1D-myo-inositol hexakisphosphate: Gln46, Tyr47, Arg75, His76, Arg79, Thr82, and Arg164. Intrachain disulfides connect Cys65-Cys444, Cys216-Cys507, Cys266-Cys295, and Cys478-Cys486. Residue His76 is the Nucleophile of the active site. Asn171 and Asn208 each carry an N-linked (GlcNAc...) asparagine glycan. 1D-myo-inositol hexakisphosphate is bound at residue Lys314. Residues Asn348, Asn352, and Asn367 are each glycosylated (N-linked (GlcNAc...) asparagine). 1D-myo-inositol hexakisphosphate is bound by residues His376 and Asp377. Asn401 is a glycosylation site (N-linked (GlcNAc...) asparagine).

Belongs to the histidine acid phosphatase family. In terms of assembly, monomer.

It is found in the secreted. The catalysed reaction is 1D-myo-inositol hexakisphosphate + H2O = 1D-myo-inositol 1,2,4,5,6-pentakisphosphate + phosphate. It carries out the reaction 1D-myo-inositol 1,2,4,5,6-pentakisphosphate + H2O = 1D-myo-inositol 1,2,5,6-tetrakisphosphate + phosphate. The enzyme catalyses 1D-myo-inositol 1,2,5,6-tetrakisphosphate + H2O = 1D-myo-inositol 1,2,6-trisphosphate + phosphate. It catalyses the reaction 1D-myo-inositol 1,2,6-trisphosphate + H2O = 1D-myo-inositol 1,2-bisphosphate + phosphate. The catalysed reaction is 1D-myo-inositol 1,2-bisphosphate + H2O = 1D-myo-inositol 2-phosphate + phosphate. Its function is as follows. Catalyzes the phosphate monoester hydrolysis of phytic acid (myo-inositol hexakisphosphate), which results in the stepwise formation of myo-inositol pentakis-, tetrakis-, tris-, bis-, and monophosphates, as well as the liberation of inorganic phosphate. Myo-inositol 2-monophosphate is the end product. Is also able to dephosphorylate the classic acid phosphatase substrate p-nitrophenyl phosphate. The sequence is that of Phytase A (pht-1) from Neurospora crassa (strain ATCC 24698 / 74-OR23-1A / CBS 708.71 / DSM 1257 / FGSC 987).